A 428-amino-acid polypeptide reads, in one-letter code: Sporulation kinase B (428 aa).

Topologically, residues 1–6 (MEILKD) are cytoplasmic. A helical membrane pass occupies residues 7-27 (YLLHICFILFPILLYQVFWLG). Topologically, residues 28-37 (KPAILVPKIN) are extracellular. Residues 38–58 (SGLVTLFACGASVLCIIFPIH) traverse the membrane as a helical segment. The Cytoplasmic portion of the chain corresponds to 59–68 (EMDYIQYGLQ). Residues 69-89 (MIPVIICLFYISTASGLTVAA) traverse the membrane as a helical segment. The Extracellular segment spans residues 90 to 99 (SVLCFELLFY). A helical transmembrane segment spans residues 100 to 120 (EPSAMFVFTLLPFLIIIPILF). The Cytoplasmic segment spans residues 121–132 (QKKWPFMSKAKK). Residues 133-153 (LLLSLLISCVEIFLFFASSWI) traverse the membrane as a helical segment. The Extracellular segment spans residues 154-166 (LSALNILNFQKSG). A helical membrane pass occupies residues 167–187 (IFVYEAAVSGLFRSSVLLLSI). Residues 188–428 (YIIESIAENI…TIKLPADLPH (241 aa)) are Cytoplasmic-facing. Positions 218 to 426 (SVAHEVRNPL…TVTIKLPADL (209 aa)) constitute a Histidine kinase domain. Residue His-221 is modified to Phosphohistidine; by autocatalysis.

The protein resides in the cell membrane. The catalysed reaction is ATP + protein L-histidine = ADP + protein N-phospho-L-histidine.. Phosphorylates the sporulation-regulatory proteins spo0A and spo0F. Spo0F is required for the KinB activity. This chain is Sporulation kinase B (kinB), found in Bacillus subtilis (strain 168).